The primary structure comprises 383 residues: Gap junction alpha-1 protein (383 aa).

At 2–23 (GDWSALGKLLDKVQAYSTAGGK) the chain is on the cytoplasmic side. At serine 5 the chain carries Phosphoserine. Residues 24 to 44 (VWLSVLFIFRILLLGTAVESA) form a helical membrane-spanning segment. The Extracellular segment spans residues 45-76 (WGDEQSAFRCNTQQPGCENVCYDKSFPISHVR). 2 disulfides stabilise this stretch: cysteine 54-cysteine 193 and cysteine 188-cysteine 199. The helical transmembrane segment at 77–97 (FWVLQIIFVSVPTLLYLAHVF) threads the bilayer. Residues 98-156 (YVMRKEEKLNKKEEELKVVAQTDGANVDMHLKQIEIKKFKYGIEEHGKVKMRGGLLRTY) lie on the Cytoplasmic side of the membrane. Lysine 145 is covalently cross-linked (Glycyl lysine isopeptide (Lys-Gly) (interchain with G-Cter in SUMO)). The helical transmembrane segment at 157-177 (IISILFKSVFEVAFLLIQWYI) threads the bilayer. Residues 178-208 (YGFSLSAVYTCKRDPCPHQVDCFLSRPTEKT) lie on the Extracellular side of the membrane. Residues 209 to 229 (IFIIFMLVVSLVSLALNIIEL) traverse the membrane as a helical segment. Residues 230 to 383 (FYVFFKGVKD…SRPRPDDLEI (154 aa)) lie on the Cytoplasmic side of the membrane. Residue lysine 238 forms a Glycyl lysine isopeptide (Lys-Gly) (interchain with G-Cter in SUMO) linkage. Residues 245–383 (SDPYHTTTGP…SRPRPDDLEI (139 aa)) are interaction with NOV. Tyrosine 248 carries the phosphotyrosine modification. Phosphoserine occurs at positions 256, 258, and 263. The tract at residues 265–383 (KYAYFNGCSS…SRPRPDDLEI (119 aa)) is interaction with UBQLN4. Position 272 is an S-nitrosocysteine (cysteine 272). Position 276 is a phosphothreonine (threonine 276). A phosphoserine mark is found at serine 307 and serine 315. Residues 318 to 333 (QNRMGQAGSTISNSHA) show a composition bias toward polar residues. Residues 318–383 (QNRMGQAGST…SRPRPDDLEI (66 aa)) form a disordered region. Serine 326 bears the Phosphoserine; by CK1 mark. Threonine 327 is subject to Phosphothreonine. A phosphoserine; by CK1 mark is found at serine 329 and serine 331. The segment covering 339–352 (PDDHQNSKKLDAGH) has biased composition (basic and acidic residues). A phosphoserine mark is found at serine 345 and serine 366. A compositionally biased stretch (low complexity) spans 363 to 375 (RPSSRASSRASSR). Residue serine 369 is modified to Phosphoserine; by PKC/PRKCG and PKC/PRKCD. 2 positions are modified to phosphoserine: serine 370 and serine 374.

The protein belongs to the connexin family. Alpha-type (group II) subfamily. In terms of assembly, a connexon is composed of a hexamer of connexins. Interacts with SGSM3. Interacts with RIC1/CIP150. Interacts with CNST and CSNK1D. Interacts (via C-terminus) with TJP1. Interacts (via C-terminus) with SRC (via SH3 domain). Interacts (not ubiquitinated) with UBQLN4 (via UBA domain). Interacts with NOV. Interacts with TMEM65. Interacts with ANK3/ANKG and PKP2. Post-translationally, phosphorylation at Ser-326, Ser-329 and Ser-331 by CK1 modulates gap junction assembly. Phosphorylated at Ser-369 by PRKCG; phosphorylation induces disassembly of gap junction plaques and inhibition of gap junction activity. Phosphorylation at Ser-369 by PRKCD triggers its internalization into small vesicles leading to proteasome-mediated degradation. Sumoylated with SUMO1, SUMO2 and SUMO3, which may regulate the level of functional Cx43 gap junctions at the plasma membrane. May be desumoylated by SENP1 or SENP2. In terms of processing, acetylated in the developing cortex; leading to delocalization from the cell membrane.

The protein resides in the cell membrane. Its subcellular location is the cell junction. The protein localises to the gap junction. It is found in the endoplasmic reticulum. Gap junction protein that acts as a regulator of bladder capacity. A gap junction consists of a cluster of closely packed pairs of transmembrane channels, the connexons, through which materials of low MW diffuse from one cell to a neighboring cell. May play a critical role in the physiology of hearing by participating in the recycling of potassium to the cochlear endolymph. Negative regulator of bladder functional capacity: acts by enhancing intercellular electrical and chemical transmission, thus sensitizing bladder muscles to cholinergic neural stimuli and causing them to contract. May play a role in cell growth inhibition through the regulation of NOV expression and localization. Plays an essential role in gap junction communication in the ventricles. The chain is Gap junction alpha-1 protein (GJA1) from Bos taurus (Bovine).